A 307-amino-acid chain; its full sequence is F-box protein PP2-B7 (307 aa).

The 47-residue stretch at 37 to 83 (PLSLGDLPEECISLIISFTSPRDACVFALVSKTFESAVQSDIVWEKF) folds into the F-box domain.

The polypeptide is F-box protein PP2-B7 (PP2B7) (Arabidopsis thaliana (Mouse-ear cress)).